The chain runs to 875 residues: Alanine--tRNA ligase (875 aa).

The Zn(2+) site is built by histidine 564, histidine 568, cysteine 666, and histidine 670.

This sequence belongs to the class-II aminoacyl-tRNA synthetase family. In terms of assembly, homotetramer. Zn(2+) is required as a cofactor.

The protein localises to the cytoplasm. It carries out the reaction tRNA(Ala) + L-alanine + ATP = L-alanyl-tRNA(Ala) + AMP + diphosphate. Its function is as follows. Catalyzes the attachment of alanine to tRNA(Ala) in a two-step reaction: alanine is first activated by ATP to form Ala-AMP and then transferred to the acceptor end of tRNA(Ala). Also edits incorrectly charged Ser-tRNA(Ala) and Gly-tRNA(Ala) via its editing domain. The polypeptide is Alanine--tRNA ligase (Pectobacterium atrosepticum (strain SCRI 1043 / ATCC BAA-672) (Erwinia carotovora subsp. atroseptica)).